Consider the following 379-residue polypeptide: Transaminase htyB (379 aa).

R92 contributes to the pyridoxal 5'-phosphate binding site. K203 carries the post-translational modification N6-(pyridoxal phosphate)lysine. A pyridoxal 5'-phosphate-binding site is contributed by E239.

Belongs to the class-IV pyridoxal-phosphate-dependent aminotransferase family. Requires pyridoxal 5'-phosphate as cofactor.

The protein operates within antifungal biosynthesis. Transaminase; part of the gene cluster that mediates the de novo generation of L-homotyrosine from acetyl-CoA and 4-hydroxyphenyl-pyruvate. L-homotyrosine is a building block of echinocandin B, a fungal lipidated cyclic hexapeptide that acts as an antifungal agent. L-homotyrosine 4-hydroxyphenyl-pyruvate first undergoes an aldol-type condensation by htyA with the C-2 of acetyl-CoA followed by the release of CoA to form 2-(4-hydroxybenzyl)-malate. This is followed by isomerization of 2-(4-hydroxy-benzyl)-malate to 3-(4-hydroxybenzyl)-malate by htyD. Thereafter, 3-(4-hydroxybenzyl)-malate undergoes decarboxylation and oxidation to form 2-oxo-4-(4-hydroxybenzyl)butanoic acid, coupled to reduction of NAD(+) to NADH by htyC. The product then undergoes transamination catalyzed by htyB to form L-homotyrosine. The chain is Transaminase htyB from Aspergillus rugulosus (Emericella rugulosa).